We begin with the raw amino-acid sequence, 490 residues long: MASVMEDPTLERHFKGHKDVISCADFNPNNKQLATGSCDKSLMIWNLAPKARAFRFVGHTDVITGVNFAPSGSLVASSSRDQTVRLWTPSIKGESTVFKAHTASVRSVHFSRDGQRLVTASDDKSVKVWGVERKKFLYSLNRHTNWVRCARFSPDGRLIASCGDDRTVRLWDTSSHQCINIFTDYGGSATFVDFNSSGTCIASSGADNTIKIWDIRTNKLIQHYKVHNAGVNCFSFHPSGNYLISGSSDSTIKILDLLEGRLIYTLHGHKGPVLTVTFSRDGDLFASGGADSQVLMWKTNFDSLNYRELLSKHSKRVTPDPPPHLMDIYPRSHHRHHPQNGTVEINPVADTQSTDPQVVEVGRVVFSTTDARNYDGASSSRAQFTSGMDSGPFRTHTQAREEEDENQEERFAGGMTASPAERSGIPSSLTSTLENIVQQLDILTQTVAVLEERLTLTEDKLRTCLDNQVLLMQQNQQLDRSDEESEGPPL.

WD repeat units lie at residues 16–55, 58–97, 100–139, 142–181, 184–223, 226–265, and 268–307; these read GHKDVISCADFNPNNKQLATGSCDKSLMIWNLAPKARAFR, GHTDVITGVNFAPSGSLVASSSRDQTVRLWTPSIKGESTV, AHTASVRSVHFSRDGQRLVTASDDKSVKVWGVERKKFLYS, RHTNWVRCARFSPDGRLIASCGDDRTVRLWDTSSHQCINI, DYGGSATFVDFNSSGTCIASSGADNTIKIWDIRTNKLIQH, VHNAGVNCFSFHPSGNYLISGSSDSTIKILDLLEGRLIYT, and GHKGPVLTVTFSRDGDLFASGGADSQVLMWKTNFDSLNYR. The segment covering 375–388 has biased composition (polar residues); sequence DGASSSRAQFTSGM. The disordered stretch occupies residues 375–427; that stretch reads DGASSSRAQFTSGMDSGPFRTHTQAREEEDENQEERFAGGMTASPAERSGIPS. The stretch at 431-463 forms a coiled coil; that stretch reads STLENIVQQLDILTQTVAVLEERLTLTEDKLRT.

This sequence belongs to the WD repeat POC1 family.

It localises to the cytoplasm. Its subcellular location is the cytoskeleton. The protein resides in the microtubule organizing center. The protein localises to the centrosome. It is found in the centriole. Functionally, plays an important role in centriole assembly and/or stability and ciliogenesis. Involved in early steps of centriole duplication, as well as in the later steps of centriole length control. The chain is POC1 centriolar protein homolog B from Danio rerio (Zebrafish).